The following is a 626-amino-acid chain: NAD-dependent malic enzyme, mitochondrial (626 aa).

The transit peptide at 1–34 directs the protein to the mitochondrion; sequence MAIFSNQMRLSSTLLKRLHQRVAAAVNSSSSRNF. 2 residues coordinate fumarate: Arg91 and Arg125. The active-site Proton donor is Tyr146. Arg199 is a (S)-malate binding site. Arg199 is an NAD(+) binding site. Catalysis depends on Lys217, which acts as the Proton acceptor. A divalent metal cation-binding residues include Glu288, Asp289, and Asp312. NAD(+) contacts are provided by Ala348 and Ala351. Residues Asn467 and Asn512 each contribute to the (S)-malate site.

It belongs to the malic enzymes family. In terms of assembly, heterodimer of two related subunits. It depends on Mg(2+) as a cofactor. Mn(2+) is required as a cofactor.

It is found in the mitochondrion matrix. The enzyme catalyses (S)-malate + NAD(+) = pyruvate + CO2 + NADH. This chain is NAD-dependent malic enzyme, mitochondrial, found in Solanum tuberosum (Potato).